Here is an 803-residue protein sequence, read N- to C-terminus: Myb-like protein V (803 aa).

Disordered stretches follow at residues 237–333 (SNIY…LPGL) and 429–803 (KSTS…SRRK). Positions 258-323 (DANDKNENNN…ENNKNKRTKS (66 aa)) form a coiled coil. The span at 271-294 (DDADDAAADDADDADDDDMDDESD) shows a compositional bias: acidic residues. Positions 295–315 (SNNNNKNSNNKNSNNKNSNEN) are enriched in low complexity. Positions 332–379 (GLWTDEECRSLIKAVMIIGHRWIKIKEDYYSTSKRKPSQLKDKMRSLR) constitute a Myb-like domain. Coiled-coil stretches lie at residues 400–429 (EIEKLAVLFQQKEEAQKLAKEKIDSLSNIK) and 463–496 (NNEDNQNESESENEDENDNNEKEKEKRNKKNSAV). Residues 429 to 438 (KSTSNTSAAS) show a composition bias toward polar residues. Composition is skewed to acidic residues over residues 448–480 (NDSDEEVDQDSDNDSNNEDNQNESESENEDEND) and 510–533 (EEEESDEEHNDSEEDSQEDSEENE). Basic residues-rich tracts occupy residues 537-553 (KQKRKSNQIKSSPKKLK) and 568-577 (HKSKLKSKPQ). Residues 573–616 (KSKPQRKVEKEESEKEESEEEESEEEEEEDDEDYESEEDKKKKK) are a coiled coil. Acidic residues predominate over residues 586–609 (EKEESEEEESEEEEEEDDEDYESE). Low complexity-rich tracts occupy residues 625–636 (TSTHTTTTTTTT) and 666–733 (KKSN…PTKK). Residues 786–795 (LNKDSKENKK) show a composition bias toward basic and acidic residues.

The sequence is that of Myb-like protein V (mybV) from Dictyostelium discoideum (Social amoeba).